The chain runs to 204 residues: Urease accessory protein UreG (204 aa).

Residue 11–18 (GPVGAGKT) participates in GTP binding.

The protein belongs to the SIMIBI class G3E GTPase family. UreG subfamily. Homodimer. UreD, UreF and UreG form a complex that acts as a GTP-hydrolysis-dependent molecular chaperone, activating the urease apoprotein by helping to assemble the nickel containing metallocenter of UreC. The UreE protein probably delivers the nickel.

It localises to the cytoplasm. Facilitates the functional incorporation of the urease nickel metallocenter. This process requires GTP hydrolysis, probably effectuated by UreG. The chain is Urease accessory protein UreG from Staphylococcus aureus (strain MSSA476).